A 431-amino-acid chain; its full sequence is Reverse prenyltransferase criA (431 aa).

Dimethylallyl diphosphate-binding residues include Arg-104, Lys-193, Tyr-195, Lys-262, Tyr-264, Tyr-347, Tyr-412, and Tyr-416.

It belongs to the tryptophan dimethylallyltransferase family. As to quaternary structure, monomer.

It catalyses the reaction cyclo(L-tryptophyl-L-alanyl) + dimethylallyl diphosphate = preechinulin + diphosphate. It participates in secondary metabolite biosynthesis. The protein operates within alkaloid biosynthesis. Its function is as follows. Reverse prenyltransferase; part of the gene cluster that mediates the biosynthesis of echinulin family alkaloid. The pathway begins with the biosynthesis of the cyclic dipeptide cyclo-L-Trp-L-Ala (cyclo-TA) by the NRPS criC via condensation of L-alanine and L-tryptophan. The prenyltransferase criA then catalyzes the first prenylation step, a reverse prenylation reaction at C2, to yield preechinulin. Preechinulin is the substrate of the cytochrome P450 monooxygenase criE that catalyzes the formation of the double bond between C10 and C11 to produce neoechulin A. The unique prenyltransferase criF functions as a competitive enzyme with criE for preechinulin metabolization and uses preechinulin for effective regiospecific prenylations. Preechinulin is prenylated by criF at C5 or C7. C7-prenylation leads to accumulation of tardioxopiperazine B without further modification by criF. In contrast, the C5-prenylated tardioxopiperazine A can be prenylated again by criF, predominantly at C7 to form echinulin or less frequently at C4 to give variecolorin L. CriF also accepts neoechilunin A to produce varlecolorin G (prenylation at C5) or isoechinulin A (prenylation at C7). CriF further converts isoechinulin A into dehydroechinulin. Moreover, a yet unidentified enzyme can also convert neoechilunin A into neoechilunin B by introducing a double bond between positions C14 and C17 and thus provides a further substrate to criF for C5 and C7 prenylation. The sequence is that of Reverse prenyltransferase criA from Aspergillus cristatus (Chinese Fuzhuan brick tea-fermentation fungus).